The chain runs to 1150 residues: Solute carrier family 12 member 6 (1150 aa).

The Cytoplasmic segment spans residues 1 to 135; that stretch reads MHPPETTTKM…DEYFDKNLAL (135 aa). The segment at 20–66 is disordered; sequence TKIDDIPGLSDTSPDLSSRSSSRVRFSSRESVPETSRSEPMSEMSGA. Residues 28 to 45 are compositionally biased toward low complexity; it reads LSDTSPDLSSRSSSRVRF. Residues Ser-32 and Ser-120 each carry the phosphoserine modification. The chain crosses the membrane as a discontinuously helical span at residues 136-158; the sequence is FEEEMDTRPKVSSLLNRMANYTN. 2 residues coordinate K(+): Ser-147 and Ser-148. Residue Ser-148 is modified to Phosphoserine. Asn-151 is a chloride binding site. The Extracellular portion of the chain corresponds to 159-165; sequence LTQGAKE. The segment at 161-181 is disordered; that stretch reads QGAKEHEEAENITEGKKKPTK. Basic and acidic residues predominate over residues 163–177; the sequence is AKEHEEAENITEGKK. The chain crosses the membrane as a helical span at residues 166-188; that stretch reads HEEAENITEGKKKPTKTPQMGTF. Topologically, residues 189–211 are cytoplasmic; sequence MGVYLPCLQNIFGVILFLRLTWV. A helical transmembrane segment spans residues 212–245; that stretch reads VGTAGVLQAFAIVLICCCCTMLTAISMSAIATNG. Topologically, residues 246 to 263 are extracellular; the sequence is VVPAGGSYFMISRALGPE. The next 2 membrane-spanning stretches (helical) occupy residues 264 to 287 and 288 to 316; these read FGGA…ILGA and IEIF…AMLN. The Extracellular portion of the chain corresponds to 317–433; the sequence is NMRVYGTAFL…FVHNNVTSIQ (117 aa). A disulfide bridge connects residues Cys-375 and Cys-390. Asn-379, Asn-398, Asn-411, and Asn-428 each carry an N-linked (GlcNAc...) asparagine glycan. The cysteines at positions 410 and 420 are disulfide-linked. A helical membrane pass occupies residues 434–454; the sequence is GIPGLASGIITENLWSNYLPK. The K(+) site is built by Ile-443, Thr-444, and Asn-446. Residues Ile-443 and Thr-444 each contribute to the chloride site. Leu-447 and Trp-448 together coordinate chloride. Residues 455–464 are Cytoplasmic-facing; the sequence is GEIIEKPSAK. Residues 465 to 487 traverse the membrane as a helical segment; sequence SSDVLGSLNHEYVLVDITTSFTL. At 488 to 518 the chain is on the extracellular side; the sequence is LVGIFFPSVTGIMAGSNRSGDLKDAQKSIPI. A helical membrane pass occupies residues 519–545; sequence GTILAILTTSFVYLSNVVLFGACIEGV. At 546–568 the chain is on the cytoplasmic side; the sequence is VLRDKFGDAVKGNLVVGTLSWPS. A run of 2 helical transmembrane segments spans residues 569 to 589 and 590 to 612; these read PWVI…QSLT and GAPR…VFGH. Residue Ile-603 coordinates chloride. The Cytoplasmic portion of the chain corresponds to 613–629; that stretch reads SKANGEPTWALLLTAAI. 2 consecutive transmembrane segments (helical) span residues 630–649 and 650–665; these read AELG…LSMF and FLMC…ALQT. Topologically, residues 666–1150 are cytoplasmic; the sequence is LLRTPNWRPR…GGSEVITIYS (485 aa). The interval 682–691 is scissor helix; sequence ALSFMGMSIC. Ser-736 bears the Phosphoserine mark. A Phosphothreonine modification is found at Thr-778. At Ser-981 the chain carries Phosphoserine. The residue at position 991 (Thr-991) is a Phosphothreonine; by OXSR1 and STK39. Ser-1023, Ser-1029, and Ser-1032 each carry phosphoserine. A Phosphothreonine; by OXSR1 and STK39 modification is found at Thr-1048. Tyr-1121 is modified (phosphotyrosine). The interaction with CKB stretch occupies residues 1133–1150; it reads ERVLLVRGGGSEVITIYS.

It belongs to the SLC12A transporter family. K/Cl co-transporter subfamily. As to quaternary structure, homodimer; adopts a domain-swap conformation at the scissor helices connecting the transmembrane domain and C-terminal domain. Heterodimer with K-Cl cotransporter SLC12A5. Interacts (via C-terminus) with CKB; the interaction may be required for potassium-chloride cotransport activity. Post-translationally, phosphorylated, phosphorylation regulates transporter activity. Phosphorylated at Thr-991 and Thr-1048 by OXSR1/OSR1 and STK39/SPAK downstream of WNK kinases (WNK1, WNK2, WNK3 or WNK4), inhibiting the potassium-chloride cotransport activity. In terms of processing, N-glycosylated. In terms of tissue distribution, expressed in brain (at protein level). Highly expressed in heart, brain and kidney. Detected at lower levels in skeletal muscle, placenta, lung and pancreas. Detected in umbilical vein endothelial cells. As to expression, more abundant in kidney. Testis specific.

The protein resides in the cell membrane. It is found in the basolateral cell membrane. It carries out the reaction K(+)(in) + chloride(in) = K(+)(out) + chloride(out). Its activity is regulated as follows. Inhibited following phosphorylation by OXSR1/OSR1 and STK39/SPAK: phosphorylation takes place downstream of WNK kinases (WNK1, WNK2, WNK3 or WNK4) in response to hyperosmotic stress and subsequent cell shrinkage. Activated by N-ethylmaleimide (NEM). Inhibited by DIOA, bumetanide and furosemide. Mediates electroneutral potassium-chloride cotransport when activated by cell swelling. May contribute to cell volume homeostasis in single cells. Its function is as follows. Mediates electroneutral potassium-chloride cotransport when activated by cell swelling. May contribute to cell volume homeostasis in single cells. In terms of biological role, mediates electroneutral potassium-chloride cotransport when activated by cell swelling. May contribute to cell volume homeostasis in single cells. The chain is Solute carrier family 12 member 6 from Homo sapiens (Human).